The sequence spans 359 residues: Mannose-1-phosphate guanylyltransferase (359 aa).

This sequence belongs to the transferase hexapeptide repeat family.

It carries out the reaction alpha-D-mannose 1-phosphate + GTP + H(+) = GDP-alpha-D-mannose + diphosphate. Its pathway is cell wall biogenesis. It participates in nucleotide-sugar biosynthesis; GDP-alpha-D-mannose biosynthesis; GDP-alpha-D-mannose from alpha-D-mannose 1-phosphate (GTP route): step 1/1. Functionally, catalyzes the formation of GDP-mannose from D-mannose-1-phosphate and GTP. Plays an important role in the synthesis of different glycoconjugates which are responsible for cell wall structure, virulence and immunomodulatory activity of M.tuberculosis. The sequence is that of Mannose-1-phosphate guanylyltransferase from Mycobacterium tuberculosis (strain ATCC 25618 / H37Rv).